Consider the following 381-residue polypeptide: Dof zinc finger protein 2 (381 aa).

A disordered region spans residues 19-81; it reads MLMGANPNPN…ARPQKEKALN (63 aa). 2 stretches are compositionally biased toward low complexity: residues 23–32 and 40–59; these read ANPNPNGSSN and SAASAQRPIAPPAAGAAAGA. The segment covering 68–79 has biased composition (basic and acidic residues); that stretch reads TERRARPQKEKA. The Dof-type zinc finger occupies 80 to 134; sequence LNCPRCNSTNTKFCYYNNYSLQQPRYFCKTCRRYWTEGGSLRNVPVGGGSRKNKR. Zn(2+)-binding residues include Cys82, Cys85, Cys107, and Cys110. The segment at 329–349 is disordered; it reads AGDANSGGDHQYDHGKNQGGG.

Its subcellular location is the nucleus. Transcription factor that may transactivate seed storage protein genes in developing seeds. The chain is Dof zinc finger protein 2 from Oryza sativa subsp. japonica (Rice).